Reading from the N-terminus, the 302-residue chain is Probable alpha-L-glutamate ligase 1 (302 aa).

An ATP-grasp domain is found at 104 to 287 (MQLLSRKGIG…VANMIIEFIE (184 aa)). ATP contacts are provided by residues lysine 141, 178–179 (EY), aspartate 187, and 211–213 (RSN). Residues aspartate 248, glutamate 260, and asparagine 262 each contribute to the Mg(2+) site. Mn(2+) is bound by residues aspartate 248, glutamate 260, and asparagine 262.

It belongs to the RimK family. It depends on Mg(2+) as a cofactor. Requires Mn(2+) as cofactor.

The chain is Probable alpha-L-glutamate ligase 1 from Pseudoalteromonas atlantica (strain T6c / ATCC BAA-1087).